Here is a 333-residue protein sequence, read N- to C-terminus: T-cell surface glycoprotein CD1b-2 (333 aa).

A signal peptide spans 1 to 20 (MLLLPLLLLGVILPGGDNED). The Extracellular segment spans residues 21-302 (VFQGPTSFHL…LYWGHPTSIG (282 aa)). Asparagine 38, asparagine 75, and asparagine 146 each carry an N-linked (GlcNAc...) asparagine glycan. 3 disulfides stabilise this stretch: cysteine 120/cysteine 184, cysteine 149/cysteine 163, and cysteine 224/cysteine 279. The Ig-like domain occupies 185–295 (PRYLLGVLDA…LGDQDIILYW (111 aa)). A helical membrane pass occupies residues 303-323 (LILVAIIVPSLILSICLALWF). Over 324–333 (WRRWSYQNIL) the chain is Cytoplasmic. The Internalization signal signature appears at 329–332 (YQNI).

As to quaternary structure, heterodimer with B2M (beta-2-microglobulin). Interacts with saposin C.

Its subcellular location is the cell membrane. The protein localises to the endosome membrane. The protein resides in the lysosome membrane. Antigen-presenting protein that binds self and non-self lipid and glycolipid antigens and presents them to T-cell receptors on natural killer T-cells. The protein is T-cell surface glycoprotein CD1b-2 of Ovis aries (Sheep).